The chain runs to 400 residues: Nicotinate phosphoribosyltransferase (400 aa).

Position 220 is a phosphohistidine; by autocatalysis (H220).

The protein belongs to the NAPRTase family. In terms of processing, transiently phosphorylated on a His residue during the reaction cycle. Phosphorylation strongly increases the affinity for substrates and increases the rate of nicotinate D-ribonucleotide production. Dephosphorylation regenerates the low-affinity form of the enzyme, leading to product release.

The catalysed reaction is nicotinate + 5-phospho-alpha-D-ribose 1-diphosphate + ATP + H2O = nicotinate beta-D-ribonucleotide + ADP + phosphate + diphosphate. Its pathway is cofactor biosynthesis; NAD(+) biosynthesis; nicotinate D-ribonucleotide from nicotinate: step 1/1. Its function is as follows. Catalyzes the synthesis of beta-nicotinate D-ribonucleotide from nicotinate and 5-phospho-D-ribose 1-phosphate at the expense of ATP. This is Nicotinate phosphoribosyltransferase from Enterobacter sp. (strain 638).